Reading from the N-terminus, the 278-residue chain is Small ribosomal subunit protein uS2 (278 aa).

Disordered regions lie at residues 216–235 (EAAA…TQWD) and 250–278 (NFAA…EWTN). Residues 256–278 (ADGNWGATTGGDWAAAGGEEWTN) show a composition bias toward low complexity.

Belongs to the universal ribosomal protein uS2 family. Component of the small ribosomal subunit. Mature ribosomes consist of a small (40S) and a large (60S) subunit. The 40S subunit contains about 33 different proteins and 1 molecule of RNA (18S). The 60S subunit contains about 49 different proteins and 3 molecules of RNA (25S, 5.8S and 5S). Interacts with ribosomal protein S21.

It localises to the cytoplasm. Its function is as follows. Required for the assembly and/or stability of the 40S ribosomal subunit. Required for the processing of the 20S rRNA-precursor to mature 18S rRNA in a late step of the maturation of 40S ribosomal subunits. The polypeptide is Small ribosomal subunit protein uS2 (Monosiga brevicollis (Choanoflagellate)).